A 334-amino-acid polypeptide reads, in one-letter code: Porphobilinogen deaminase (334 aa).

At Cys258 the chain carries S-(dipyrrolylmethanemethyl)cysteine.

The protein belongs to the HMBS family. As to quaternary structure, monomer. The cofactor is dipyrromethane.

The catalysed reaction is 4 porphobilinogen + H2O = hydroxymethylbilane + 4 NH4(+). The protein operates within porphyrin-containing compound metabolism; protoporphyrin-IX biosynthesis; coproporphyrinogen-III from 5-aminolevulinate: step 2/4. In terms of biological role, tetrapolymerization of the monopyrrole PBG into the hydroxymethylbilane pre-uroporphyrinogen in several discrete steps. The chain is Porphobilinogen deaminase from Ralstonia nicotianae (strain ATCC BAA-1114 / GMI1000) (Ralstonia solanacearum).